Here is a 229-residue protein sequence, read N- to C-terminus: Artemin (229 aa).

Ala-1 bears the N-acetylalanine mark. The Ferritin-like diiron domain occupies His-25–Gly-173.

This sequence belongs to the ferritin family.

The sequence is that of Artemin from Artemia salina (Brine shrimp).